A 224-amino-acid polypeptide reads, in one-letter code: ATP-dependent dethiobiotin synthetase BioD (224 aa).

Residue asparagine 13–isoleucine 18 coordinates ATP. Threonine 17 contacts Mg(2+). The active site involves lysine 38. A substrate-binding site is contributed by serine 42. Residues aspartate 55, glutamate 116–glycine 119, asparagine 176–asparagine 177, and asparagine 211 contribute to the ATP site. Residues aspartate 55 and glutamate 116 each coordinate Mg(2+).

This sequence belongs to the dethiobiotin synthetase family. As to quaternary structure, homodimer. The cofactor is Mg(2+).

The protein resides in the cytoplasm. The enzyme catalyses (7R,8S)-7,8-diammoniononanoate + CO2 + ATP = (4R,5S)-dethiobiotin + ADP + phosphate + 3 H(+). It functions in the pathway cofactor biosynthesis; biotin biosynthesis; biotin from 7,8-diaminononanoate: step 1/2. Its function is as follows. Catalyzes a mechanistically unusual reaction, the ATP-dependent insertion of CO2 between the N7 and N8 nitrogen atoms of 7,8-diaminopelargonic acid (DAPA, also called 7,8-diammoniononanoate) to form a ureido ring. In Buchnera aphidicola subsp. Acyrthosiphon pisum (strain 5A), this protein is ATP-dependent dethiobiotin synthetase BioD.